The chain runs to 514 residues: Carboxysome shell carbonic anhydrase (514 aa).

An N-terminal domain region spans residues 1 to 144; it reads MNTRNTRSKQ…LTAATEQFSR (144 aa). Residues 151 to 397 are catalytic domain; that stretch reads DDSASAIGFF…GRYPPNDIGH (247 aa). C173 is a Zn(2+) binding site. D175 (proton acceptor) is an active-site residue. Positions 242 and 253 each coordinate Zn(2+). A C-terminal domain region spans residues 398–514; sequence AERYISVGDG…GSPIEEVASA (117 aa).

Belongs to the beta-class carbonic anhydrase family. CsoSCA subfamily. Homodimer, may form filaments. Requires Zn(2+) as cofactor.

The protein resides in the carboxysome. The catalysed reaction is hydrogencarbonate + H(+) = CO2 + H2O. With respect to regulation, carbonic anhydrase activity is inhibited by ethoxyzolamide, dithiothreitol, cyanide, and divalent metal chelators dipicolinic acid and nitrilotriacetic acid. Its function is as follows. Reversible hydration of carbon dioxide. Essential for chemolithotrophic carbon dioxide fixation, supplies CO(2) to RuBisCO (ribulose bisphosphate carboxylase, cbbL-cbbS) in the carboxysome. There are estimated to be 40 CsoSCA dimers per carboxysome. Functionally, unlike beta-carboxysomes, alpha-carboxysomes (Cb) can form without cargo protein. CsoS2 is essential for Cb formation and is also capable of targeting foreign proteins to the Cb. The Cb shell assembles with the aid of CsoS2; CsoS1A, CsoS1B and CsoS1C form the majority of the shell while CsoS4A and CsoS4B form vertices. CsoS1D forms pseudohexamers that probably control metabolite flux into and out of the shell. The sequence is that of Carboxysome shell carbonic anhydrase from Halothiobacillus neapolitanus (strain ATCC 23641 / c2) (Thiobacillus neapolitanus).